The primary structure comprises 270 residues: Indole-3-glycerol phosphate synthase (270 aa).

This sequence belongs to the TrpC family.

The catalysed reaction is 1-(2-carboxyphenylamino)-1-deoxy-D-ribulose 5-phosphate + H(+) = (1S,2R)-1-C-(indol-3-yl)glycerol 3-phosphate + CO2 + H2O. The protein operates within amino-acid biosynthesis; L-tryptophan biosynthesis; L-tryptophan from chorismate: step 4/5. This Salinibacter ruber (strain DSM 13855 / M31) protein is Indole-3-glycerol phosphate synthase.